The following is an 846-amino-acid chain: Rho GTPase-activating protein 17 (846 aa).

Positions 14–246 (QTVGRAEKTE…MRAHQDKWAE (233 aa)) constitute a BAR domain. A Rho-GAP domain is found at 252 to 442 (TPLEEHLKRS…PIIQHADWFF (191 aa)). Polar residues predominate over residues 459 to 475 (TPNSNHSSHTGNDSDSG). The disordered stretch occupies residues 459–482 (TPNSNHSSHTGNDSDSGTLERKRP). A phosphoserine mark is found at Ser-484 and Ser-575. The interval 519-807 (IAPAFQPPLP…ASRIVTDTNS (289 aa)) is disordered. Polar residues predominate over residues 592 to 619 (RNSNQMTTVPNQAQTGGNSHQLSVSTPH). Over residues 637-650 (APAPPKPGNLPPGH) the composition is skewed to pro residues. Residues 653–690 (GQSSPGTGTSPKPSARSPSPPQQQQQQQQQQQQQQQQQ) are compositionally biased toward low complexity. Phosphoserine is present on residues Ser-698 and Ser-700. Pro residues-rich tracts occupy residues 704-717 (IQAPSHPPPQPPTQ) and 726-741 (EPGPTPPQTPTPPSTP). Phosphothreonine is present on residues Thr-730, Thr-734, and Thr-736. Positions 730 to 743 (TPPQTPTPPSTPPL) match the SH3-binding motif. Ser-739 carries the post-translational modification Phosphoserine. A Phosphothreonine modification is found at Thr-740. Residues 746–757 (QNPSQSETTQLH) are compositionally biased toward polar residues. Pro residues predominate over residues 772–782 (RPSVPPPPHPP). Over residues 791 to 807 (LTSSVPTASRIVTDTNS) the composition is skewed to polar residues.

In terms of assembly, component of a complex whose core is composed of ARHGAP17, AMOT, PALS1, PATJ and PARD3/PAR3. Interacts with NHERF1, FNBP1, TRIP10, CAPZA (CAPZA1, CAPZA2 or CAPZA3), CAPZB, CD2AP and SH3KBP1/CIN85.

The protein localises to the membrane. Its subcellular location is the cytoplasm. It is found in the cell junction. It localises to the tight junction. Rho GTPase-activating protein involved in the maintenance of tight junction by regulating the activity of CDC42, thereby playing a central role in apical polarity of epithelial cells. Specifically acts as a GTPase activator for the CDC42 GTPase by converting it to an inactive GDP-bound state. The complex formed with AMOT acts by regulating the uptake of polarity proteins at tight junctions, possibly by deciding whether tight junction transmembrane proteins are recycled back to the plasma membrane or sent elsewhere. Participates in the Ca(2+)-dependent regulation of exocytosis, possibly by catalyzing GTPase activity of Rho family proteins and by inducing the reorganization of the cortical actin filaments. Acts as a GTPase activator in vitro for RAC1. This Mus musculus (Mouse) protein is Rho GTPase-activating protein 17 (Arhgap17).